A 191-amino-acid polypeptide reads, in one-letter code: Protein UL140 (191 aa).

The chain crosses the membrane as a helical span at residues 28 to 48 (TLVVFGFIVTLLFFLFMLYFW).

The protein localises to the host membrane. The sequence is that of Protein UL140 (UL140) from Homo sapiens (Human).